We begin with the raw amino-acid sequence, 136 residues long: Mite allergen Der f 21.0101 (136 aa).

Positions 1 to 17 are cleaved as a signal peptide; that stretch reads MKFIIFCAIVMAVSVSG.

This sequence belongs to the mite group 5 allergen family. In terms of assembly, monomer. Homodimer. In terms of tissue distribution, highly expressed in foregut (stomach), midgut and hindgut. Not expressed in body wall, reproductive system or body cavity.

The polypeptide is Mite allergen Der f 21.0101 (Dermatophagoides farinae (American house dust mite)).